A 500-amino-acid chain; its full sequence is Cysteine--tRNA ligase (500 aa).

Residue cysteine 29 coordinates Zn(2+). The short motif at 31 to 41 is the 'HIGH' region element; that stretch reads VTVYDLCHLGH. Zn(2+) is bound by residues cysteine 213, histidine 238, and glutamate 242. Positions 270-274 match the 'KMSKS' region motif; that stretch reads KMSKS. Lysine 273 provides a ligand contact to ATP.

The protein belongs to the class-I aminoacyl-tRNA synthetase family. Monomer. Requires Zn(2+) as cofactor.

Its subcellular location is the cytoplasm. It catalyses the reaction tRNA(Cys) + L-cysteine + ATP = L-cysteinyl-tRNA(Cys) + AMP + diphosphate. This is Cysteine--tRNA ligase from Prochlorococcus marinus (strain NATL2A).